The primary structure comprises 135 residues: UPF0355 protein SACOL0457 (135 aa).

This sequence belongs to the UPF0355 family.

The sequence is that of UPF0355 protein SACOL0457 from Staphylococcus aureus (strain COL).